A 275-amino-acid chain; its full sequence is Diaminopimelate epimerase (275 aa).

Asn20 and Asn63 together coordinate substrate. The Proton donor role is filled by Cys72. Residues 73-74 (GN), Asn179, and 197-198 (ER) contribute to the substrate site. Residue Cys207 is the Proton acceptor of the active site. Residue 208–209 (GT) participates in substrate binding.

The protein belongs to the diaminopimelate epimerase family. Homodimer.

The protein resides in the cytoplasm. The enzyme catalyses (2S,6S)-2,6-diaminopimelate = meso-2,6-diaminopimelate. It functions in the pathway amino-acid biosynthesis; L-lysine biosynthesis via DAP pathway; DL-2,6-diaminopimelate from LL-2,6-diaminopimelate: step 1/1. Its function is as follows. Catalyzes the stereoinversion of LL-2,6-diaminopimelate (L,L-DAP) to meso-diaminopimelate (meso-DAP), a precursor of L-lysine and an essential component of the bacterial peptidoglycan. The chain is Diaminopimelate epimerase from Chlamydia trachomatis serovar L2 (strain ATCC VR-902B / DSM 19102 / 434/Bu).